The following is a 453-amino-acid chain: MSDLSSNRLPNRASRVTNQALSAIERFLHIEALSGVVLLLAAAAALMFANSEYASLYESFWHTPLGFNFGHFTLSWDLHFWVNDALMAVFFLVAGMEIRREIHEGALADFKQAILPIVAAIGGVCLPAIIYFSFNFNSGQIHGWAVPTATDIAFALGILALLGKKIPSNLHIILLSLAIIDDIIAVLIIAFFYSTNIDPSGLVIAIAGIALVLFFQWIGFASAWLYILPGAIIWWGLMVTGIHPSLAGVILGMMTPVLPTRTLIAPLTILSNAMQILQEKNTKTDLHHISTALKKMRKGQRDIIAPVTRIQKALHPWVAYGVMPIFAFANAGVSFANFDLSSDKSFLIVLGVVIGLFIGKPLGIITASYLAVKSGLCRLPPQMTWAGILLIGFLAGIGFTMSIFVSMLAFKDIVLLDSAKIGVLCGSGLSALIGLGYGLIYIKRNKKASHSSQ.

12 helical membrane passes run 27-47 (FLHIEALSGVVLLLAAAAALM), 78-98 (LHFWVNDALMAVFFLVAGMEI), 114-134 (ILPIVAAIGGVCLPAIIYFSF), 143-163 (GWAVPTATDIAFALGILALLG), 172-192 (IILLSLAIIDDIIAVLIIAFF), 201-221 (GLVIAIAGIALVLFFQWIGFA), 222-242 (SAWLYILPGAIIWWGLMVTGI), 249-269 (VILGMMTPVLPTRTLIAPLTI), 316-336 (PWVAYGVMPIFAFANAGVSFA), 346-366 (FLIVLGVVIGLFIGKPLGIIT), 385-405 (WAGILLIGFLAGIGFTMSIFV), and 421-441 (IGVLCGSGLSALIGLGYGLIY).

The protein belongs to the NhaA Na(+)/H(+) (TC 2.A.33) antiporter family.

It is found in the cell inner membrane. It carries out the reaction Na(+)(in) + 2 H(+)(out) = Na(+)(out) + 2 H(+)(in). Na(+)/H(+) antiporter that extrudes sodium in exchange for external protons. The sequence is that of Na(+)/H(+) antiporter NhaA from Bartonella henselae (strain ATCC 49882 / DSM 28221 / CCUG 30454 / Houston 1) (Rochalimaea henselae).